Here is a 158-residue protein sequence, read N- to C-terminus: Tryptophan-rich sensory protein (158 aa).

Helical transmembrane passes span 5 to 25 (WALF…GALL), 44 to 65 (WVFP…MRVA), 73 to 93 (ALAF…VFFG), 97 to 119 (MATA…WAFF), and 124 to 144 (WAGV…GLNF).

It belongs to the TspO/BZRP family. As to quaternary structure, homodimer.

It localises to the membrane. The protein resides in the cell inner membrane. Its function is as follows. May play a role in the transmembrane transport of tetrapyrroles and similar compounds, and thereby contribute to the regulation of tetrapyrrole biosynthesis. Binds tetrapyrroles and promotes the photooxidative degradation of protoporphyrin IX. Binds protoporphyrin IX, hemin, and coproporphyrin III, but does not bind delta-aminolevulinic acid. Can bind bilirubin, curcumin, gossypol, retinoic acid, cholesterol and the benzodiazepine receptor agonist PK-11195 (in vitro). Plays a role in the response to low oxygen levels and in the regulation of the biosynthesis of photosynthetic pigments. The polypeptide is Tryptophan-rich sensory protein (Cereibacter sphaeroides (Rhodobacter sphaeroides)).